The chain runs to 424 residues: MTESVTNQPLSDVDPDVAQAIQDELGRQRSTLEMIASENFAPRAVLEAQGSVLTNKYAEGYPGRRYYGGCEYVDVVENLARDRACELFGADHANVQPHSGAQANTAVMAALMQPGDTLMGLSLAHGGHLTHGMKINVSGKLYNIAAYEVEPETYRIDMDRVREQALEARPNVIVAGWSAYSRQLDFEAFRSIADEVGAKLWVDMAHFAGLVAAGLHPNPVPHAHVTTSTVHKTLAGPRSGVILCEADLKKKIDSAVFPGQQGGPLMHAIAGKAVAFKIAASEGFAERQRRTIEGAQILAERLTAPDLAEHGVSVLTGGTDVHLVLVDLRDSELDGKQAEDLLHRAGITVNRNAVPWDPRPPMVTSGLRIGTPALATRGFGAEQFTEVADVIAQALMPGADVDALRSRVDALTEQFPLYPGLEEW.

Residues Leu123 and 127–129 (GHL) contribute to the (6S)-5,6,7,8-tetrahydrofolate site. At Lys232 the chain carries N6-(pyridoxal phosphate)lysine. Glu245 is a (6S)-5,6,7,8-tetrahydrofolate binding site.

The protein belongs to the SHMT family. As to quaternary structure, homodimer. Requires pyridoxal 5'-phosphate as cofactor.

Its subcellular location is the cytoplasm. The enzyme catalyses (6R)-5,10-methylene-5,6,7,8-tetrahydrofolate + glycine + H2O = (6S)-5,6,7,8-tetrahydrofolate + L-serine. The protein operates within one-carbon metabolism; tetrahydrofolate interconversion. Its pathway is amino-acid biosynthesis; glycine biosynthesis; glycine from L-serine: step 1/1. Its function is as follows. Catalyzes the reversible interconversion of serine and glycine with tetrahydrofolate (THF) serving as the one-carbon carrier. This reaction serves as the major source of one-carbon groups required for the biosynthesis of purines, thymidylate, methionine, and other important biomolecules. Also exhibits THF-independent aldolase activity toward beta-hydroxyamino acids, producing glycine and aldehydes, via a retro-aldol mechanism. The protein is Serine hydroxymethyltransferase of Kocuria rhizophila (strain ATCC 9341 / DSM 348 / NBRC 103217 / DC2201).